The following is a 303-amino-acid chain: Quinolinate synthase (303 aa).

Iminosuccinate is bound by residues H24 and S41. Residue C86 participates in [4Fe-4S] cluster binding. Iminosuccinate-binding positions include 112 to 114 (YIN) and S129. Residue C172 coordinates [4Fe-4S] cluster. Residues 198-200 (HPE) and T215 contribute to the iminosuccinate site. [4Fe-4S] cluster is bound at residue C260.

This sequence belongs to the quinolinate synthase family. Type 2 subfamily. Requires [4Fe-4S] cluster as cofactor.

The protein localises to the cytoplasm. The catalysed reaction is iminosuccinate + dihydroxyacetone phosphate = quinolinate + phosphate + 2 H2O + H(+). It functions in the pathway cofactor biosynthesis; NAD(+) biosynthesis; quinolinate from iminoaspartate: step 1/1. Functionally, catalyzes the condensation of iminoaspartate with dihydroxyacetone phosphate to form quinolinate. The polypeptide is Quinolinate synthase (Caldicellulosiruptor saccharolyticus (strain ATCC 43494 / DSM 8903 / Tp8T 6331)).